The sequence spans 142 residues: Large-conductance mechanosensitive channel (142 aa).

3 helical membrane passes run 10 to 30 (FAVK…GAFG), 40 to 60 (LIMP…LFIV), and 86 to 106 (GNFI…FVMV).

This sequence belongs to the MscL family. As to quaternary structure, homopentamer.

The protein localises to the cell inner membrane. In terms of biological role, channel that opens in response to stretch forces in the membrane lipid bilayer. May participate in the regulation of osmotic pressure changes within the cell. This chain is Large-conductance mechanosensitive channel, found in Acidovorax ebreus (strain TPSY) (Diaphorobacter sp. (strain TPSY)).